The following is a 426-amino-acid chain: Tektin-1 (426 aa).

Coiled coils occupy residues 21–84 (KNQY…LEQL), 268–307 (LKETKAARDQLAAHLAKVMEEIACQEKNMTVLEKAILDQE), and 339–383 (KEVG…ENTI). Residues 396-426 (SNPLRDGGDQGQWARACAPTPSAEDGTSHTD) are disordered.

It belongs to the tektin family. Microtubule inner protein component of sperm flagellar doublet microtubules. In terms of processing, ubiquitinated, leading to its degradation. Deubiquitinated by USP16, promoting its stability.

Its subcellular location is the cytoplasm. The protein localises to the cytoskeleton. It is found in the cilium axoneme. It localises to the flagellum axoneme. Its function is as follows. Microtubule inner protein (MIP) part of the dynein-decorated doublet microtubules (DMTs) in cilia and flagellar axoneme. Forms filamentous polymers in the walls of ciliary and flagellar microtubules. This Canis lupus familiaris (Dog) protein is Tektin-1 (TEKT1).